Consider the following 414-residue polypeptide: 2,3-diketo-5-methylthiopentyl-1-phosphate enolase (414 aa).

K99 functions as the Proton acceptor in the catalytic mechanism. Residues K148, K174 to E177, H265, G338, and G360 to G361 each bind substrate. 3 residues coordinate Mg(2+): K174, D176, and E177. Residue K174 is modified to N6-carboxylysine.

This sequence belongs to the RuBisCO large chain family. Type IV subfamily. Homodimer. Mg(2+) serves as cofactor.

It catalyses the reaction 5-methylsulfanyl-2,3-dioxopentyl phosphate = 2-hydroxy-5-methylsulfanyl-3-oxopent-1-enyl phosphate. It participates in amino-acid biosynthesis; L-methionine biosynthesis via salvage pathway; L-methionine from S-methyl-5-thio-alpha-D-ribose 1-phosphate: step 3/6. Its function is as follows. Catalyzes the enolization of 2,3-diketo-5-methylthiopentyl-1-phosphate (DK-MTP-1-P) into 2-hydroxy-3-keto-5-methylthiopentenyl-1-phosphate (HK-MTPenyl-1-P). The chain is 2,3-diketo-5-methylthiopentyl-1-phosphate enolase from Bacillus cereus (strain G9842).